The sequence spans 199 residues: Holliday junction branch migration complex subunit RuvA (199 aa).

A domain I region spans residues 1–64 (MIALLTGKLA…EDAINLYGFR (64 aa)). Residues 65–143 (TQQEKELFQL…KLGLAQPQAG (79 aa)) are domain II. A flexible linker region spans residues 144–148 (GTTAP). The segment at 149-199 (AKQEIRDDVLSALINLGYKEAVVQKALAELKVTEDATVELVLKQALKILMK) is domain III.

It belongs to the RuvA family. Homotetramer. Forms an RuvA(8)-RuvB(12)-Holliday junction (HJ) complex. HJ DNA is sandwiched between 2 RuvA tetramers; dsDNA enters through RuvA and exits via RuvB. An RuvB hexamer assembles on each DNA strand where it exits the tetramer. Each RuvB hexamer is contacted by two RuvA subunits (via domain III) on 2 adjacent RuvB subunits; this complex drives branch migration. In the full resolvosome a probable DNA-RuvA(4)-RuvB(12)-RuvC(2) complex forms which resolves the HJ.

The protein resides in the cytoplasm. Functionally, the RuvA-RuvB-RuvC complex processes Holliday junction (HJ) DNA during genetic recombination and DNA repair, while the RuvA-RuvB complex plays an important role in the rescue of blocked DNA replication forks via replication fork reversal (RFR). RuvA specifically binds to HJ cruciform DNA, conferring on it an open structure. The RuvB hexamer acts as an ATP-dependent pump, pulling dsDNA into and through the RuvAB complex. HJ branch migration allows RuvC to scan DNA until it finds its consensus sequence, where it cleaves and resolves the cruciform DNA. The protein is Holliday junction branch migration complex subunit RuvA of Citrifermentans bemidjiense (strain ATCC BAA-1014 / DSM 16622 / JCM 12645 / Bem) (Geobacter bemidjiensis).